We begin with the raw amino-acid sequence, 429 residues long: C4-dicarboxylate transport protein (429 aa).

8 consecutive transmembrane segments (helical) span residues 3 to 23 (VSIF…GVLL), 44 to 64 (LIKM…IAGM), 76 to 96 (IALL…LVVV), 144 to 164 (AFAS…GFAL), 184 to 204 (VIFG…FGAM), 222 to 242 (LILC…GTIA), 331 to 351 (TLLV…GSGF), and 352 to 372 (IVLA…LALI).

This sequence belongs to the dicarboxylate/amino acid:cation symporter (DAACS) (TC 2.A.23) family.

It is found in the cell inner membrane. In terms of biological role, responsible for the transport of dicarboxylates such as succinate, fumarate, and malate from the periplasm across the membrane. The protein is C4-dicarboxylate transport protein of Yersinia pseudotuberculosis serotype O:1b (strain IP 31758).